We begin with the raw amino-acid sequence, 164 residues long: Phosphopantetheine adenylyltransferase (164 aa).

Position 10 (Ser-10) interacts with substrate. ATP is bound by residues 10–11 and His-18; that span reads SF. Substrate-binding residues include Lys-42, Leu-74, and Arg-88. ATP is bound by residues 89–91, Glu-99, and 124–130; these read GLR and YSFLSSS.

The protein belongs to the bacterial CoaD family. As to quaternary structure, homohexamer. Mg(2+) is required as a cofactor.

Its subcellular location is the cytoplasm. It catalyses the reaction (R)-4'-phosphopantetheine + ATP + H(+) = 3'-dephospho-CoA + diphosphate. It participates in cofactor biosynthesis; coenzyme A biosynthesis; CoA from (R)-pantothenate: step 4/5. Its function is as follows. Reversibly transfers an adenylyl group from ATP to 4'-phosphopantetheine, yielding dephospho-CoA (dPCoA) and pyrophosphate. The chain is Phosphopantetheine adenylyltransferase from Exiguobacterium sibiricum (strain DSM 17290 / CCUG 55495 / CIP 109462 / JCM 13490 / 255-15).